Here is a 134-residue protein sequence, read N- to C-terminus: Large ribosomal subunit protein uL16c (134 aa).

The protein belongs to the universal ribosomal protein uL16 family. Part of the 50S ribosomal subunit.

It localises to the plastid. The protein localises to the chloroplast. The chain is Large ribosomal subunit protein uL16c from Gnetum parvifolium (Small-leaved jointfir).